The following is a 276-amino-acid chain: NH(3)-dependent NAD(+) synthetase (276 aa).

43–50 (GISGGVDS) contributes to the ATP binding site. Residue D49 participates in Mg(2+) binding. R146 serves as a coordination point for deamido-NAD(+). ATP is bound at residue T166. Position 171 (E171) interacts with Mg(2+). Positions 179 and 186 each coordinate deamido-NAD(+). ATP contacts are provided by K195 and T217. 266–267 (HK) is a binding site for deamido-NAD(+).

This sequence belongs to the NAD synthetase family. As to quaternary structure, homodimer.

It catalyses the reaction deamido-NAD(+) + NH4(+) + ATP = AMP + diphosphate + NAD(+) + H(+). Its pathway is cofactor biosynthesis; NAD(+) biosynthesis; NAD(+) from deamido-NAD(+) (ammonia route): step 1/1. Catalyzes the ATP-dependent amidation of deamido-NAD to form NAD. Uses ammonia as a nitrogen source. This Vibrio parahaemolyticus serotype O3:K6 (strain RIMD 2210633) protein is NH(3)-dependent NAD(+) synthetase.